The following is a 149-amino-acid chain: Macrodomain Ter protein (149 aa).

It belongs to the MatP family. As to quaternary structure, homodimer.

Its subcellular location is the cytoplasm. Its function is as follows. Required for spatial organization of the terminus region of the chromosome (Ter macrodomain) during the cell cycle. Prevents early segregation of duplicated Ter macrodomains during cell division. Binds specifically to matS, which is a 13 bp signature motif repeated within the Ter macrodomain. In Vibrio cholerae serotype O1 (strain ATCC 39315 / El Tor Inaba N16961), this protein is Macrodomain Ter protein.